We begin with the raw amino-acid sequence, 233 residues long: Ion-translocating oxidoreductase complex subunit E (233 aa).

6 helical membrane-spanning segments follow: residues 18–38 (ALVQ…ATNA), 39–59 (LGLG…VSAL), 69–89 (IPIY…LINA), 92–112 (FGLY…CIVI), 128–148 (ALDG…LGAL), and 182–202 (PFLL…LLAG).

The protein belongs to the NqrDE/RnfAE family. In terms of assembly, the complex is composed of six subunits: RnfA, RnfB, RnfC, RnfD, RnfE and RnfG.

The protein resides in the cell inner membrane. Part of a membrane-bound complex that couples electron transfer with translocation of ions across the membrane. The protein is Ion-translocating oxidoreductase complex subunit E of Yersinia pseudotuberculosis serotype O:3 (strain YPIII).